A 194-amino-acid polypeptide reads, in one-letter code: Cell division protein SepF (194 aa).

Disordered regions lie at residues 35-54 (DHRSDHASGGALATPSDSSP) and 159-194 (SAPSMVSQDHDSVPSSSQQTGAAPVPAWEATSAGGL).

This sequence belongs to the SepF family. As to quaternary structure, homodimer. Interacts with FtsZ.

Its subcellular location is the cytoplasm. In terms of biological role, cell division protein that is part of the divisome complex and is recruited early to the Z-ring. Probably stimulates Z-ring formation, perhaps through the cross-linking of FtsZ protofilaments. Its function overlaps with FtsA. The sequence is that of Cell division protein SepF from Prochlorococcus marinus (strain MIT 9313).